The following is a 338-amino-acid chain: MANRANRHAARTEDSDNTINYVQCDGLAVMKMVKHCHEESSNMDLAQGALLGLVVDKCLEITNCFPFPKSGDETMDEEMYQLTVMRRLRRVNVDHLHVGWYQSSDVGNSLSMALLESQYHYQTSIEESVVVVYDTQKSSRGFLCLKAYRLTPQAIQMYKDGDFTPEAFRTLKVGYENLFAEIPIVIKNSPLTNIMMSELNELLPEDKGHNFLDLGTATVLENQMRSLIERVDELYQEAVRYNKYQQVVFKQDTEKHRALAKLAAENAVRTSKGEPTVPEDEVIKQFRPMTAPNRLTATITSGQINTHAQHIAQFCSQSLAKLFITESLQIAKEAKEAK.

Residues 22 to 154 (VQCDGLAVMK…LKAYRLTPQA (133 aa)) form the MPN domain.

This sequence belongs to the eIF-3 subunit H family. As to quaternary structure, component of the eukaryotic translation initiation factor 3 (eIF-3) complex. The eIF-3 complex interacts with pix. Interacts with mxt.

It is found in the cytoplasm. In terms of biological role, component of the eukaryotic translation initiation factor 3 (eIF-3) complex, which is involved in protein synthesis of a specialized repertoire of mRNAs and, together with other initiation factors, stimulates binding of mRNA and methionyl-tRNAi to the 40S ribosome. The eIF-3 complex specifically targets and initiates translation of a subset of mRNAs involved in cell proliferation. The chain is Eukaryotic translation initiation factor 3 subunit H from Drosophila sechellia (Fruit fly).